Reading from the N-terminus, the 115-residue chain is NAD(P)H-quinone oxidoreductase subunit M (115 aa).

The protein belongs to the complex I NdhM subunit family. In terms of assembly, NDH-1 can be composed of about 15 different subunits; different subcomplexes with different compositions have been identified which probably have different functions.

It localises to the cellular thylakoid membrane. The enzyme catalyses a plastoquinone + NADH + (n+1) H(+)(in) = a plastoquinol + NAD(+) + n H(+)(out). It catalyses the reaction a plastoquinone + NADPH + (n+1) H(+)(in) = a plastoquinol + NADP(+) + n H(+)(out). NDH-1 shuttles electrons from an unknown electron donor, via FMN and iron-sulfur (Fe-S) centers, to quinones in the respiratory and/or the photosynthetic chain. The immediate electron acceptor for the enzyme in this species is believed to be plastoquinone. Couples the redox reaction to proton translocation, and thus conserves the redox energy in a proton gradient. Cyanobacterial NDH-1 also plays a role in inorganic carbon-concentration. The sequence is that of NAD(P)H-quinone oxidoreductase subunit M from Prochlorococcus marinus (strain NATL2A).